We begin with the raw amino-acid sequence, 98 residues long: Signal peptidase complex subunit 1 (98 aa).

The Cytoplasmic segment spans residues 1 to 18 (MLDIQTHMDFAGQGKAER). The chain crosses the membrane as a helical span at residues 19–38 (WSRFIITFFGIVGLVYGAFV). At 39–42 (QQFS) the chain is on the lumenal side. The chain crosses the membrane as a helical span at residues 43-65 (QTVYILGAGFVLSSLITIPPWPL). The Cytoplasmic segment spans residues 66 to 98 (YRRNALKWQKPIDTDAKSSSSESGDEGKKKKKQ). Residues 78–98 (DTDAKSSSSESGDEGKKKKKQ) are disordered. Ser-84, Ser-85, Ser-86, and Ser-88 each carry phosphoserine.

The protein belongs to the SPCS1 family. Component of the signal peptidase complex (SPC) composed of a catalytic subunit twr/SEC11 and three accessory subunits Spase12/SPCS1, Spase25/SPCS2 and Spase22-23/SPCS3. The complex induces a local thinning of the ER membrane which is used to measure the length of the signal peptide (SP) h-region of protein substrates. This ensures the selectivity of the complex towards h-regions shorter than 18-20 amino acids.

Its subcellular location is the endoplasmic reticulum membrane. Its function is as follows. Component of the signal peptidase complex (SPC) which catalyzes the cleavage of N-terminal signal sequences from nascent proteins as they are translocated into the lumen of the endoplasmic reticulum. Dispensable for SPC enzymatic activity. In terms of biological role, (Microbial infection) Plays an important role in infection by flaviviruses such as West Nile virus and Dengue virus type 2. This is Signal peptidase complex subunit 1 (Spase12) from Drosophila melanogaster (Fruit fly).